A 255-amino-acid chain; its full sequence is Glutamate racemase (255 aa).

Substrate-binding positions include 7-8 (DS) and 39-40 (YG). Residue Cys-70 is the Proton donor/acceptor of the active site. 71–72 (NT) contributes to the substrate binding site. Catalysis depends on Cys-181, which acts as the Proton donor/acceptor. Substrate is bound at residue 182–183 (TH).

Belongs to the aspartate/glutamate racemases family.

It catalyses the reaction L-glutamate = D-glutamate. It participates in cell wall biogenesis; peptidoglycan biosynthesis. Its function is as follows. Provides the (R)-glutamate required for cell wall biosynthesis. The protein is Glutamate racemase of Helicobacter pylori (strain G27).